We begin with the raw amino-acid sequence, 668 residues long: Protein IQ-DOMAIN 14 (668 aa).

Positions 1 to 11 (MVKKGSWFSAI) are calmodulin-binding. Disordered stretches follow at residues 16–54 (TPHSKEKLANEPERKSGKEKKKKGFGKLRHGETNSFLPI) and 66–305 (GEAE…PRAV). The segment covering 18–31 (HSKEKLANEPERKS) has biased composition (basic and acidic residues). A compositionally biased stretch (basic residues) spans 32–43 (GKEKKKKGFGKL). Positions 78–96 (PPTPDRPNPYSASPPPRPA) are enriched in pro residues. 2 stretches are compositionally biased toward low complexity: residues 97–120 (SPRVASPRPTSPRVASPRVPSPRA) and 166–175 (PSSASANAPP). Pro residues predominate over residues 269–279 (PTTPKPPSPRS). 2 consecutive IQ domains span residues 321–350 (QHASATKIQGAFRGYMARKSFRALKGLVRL) and 343–372 (ALKGLVRLQGVVRGYSVKRQTINAMKYMQQ). 2 disordered regions span residues 399–431 (AKWAASEAGNDNWDDSVLTKEERDSRSQRKTDA) and 476–561 (SPAP…SLTS). Over residues 415–431 (VLTKEERDSRSQRKTDA) the composition is skewed to basic and acidic residues. A compositionally biased stretch (polar residues) spans 516-529 (DTSTPRSSRSTFHT).

Belongs to the IQD family. In terms of assembly, binds to multiple calmodulin (CaM) in the presence of Ca(2+) and CaM-like proteins. As to expression, expressed in hypocotyls, cotyledons, leaves and petioles.

Its subcellular location is the cell membrane. The protein localises to the cytoplasm. It is found in the cytoskeleton. Its function is as follows. May be involved in cooperative interactions with calmodulins or calmodulin-like proteins. Recruits calmodulin proteins to microtubules, thus being a potential scaffold in cellular signaling and trafficking. Regulates cell and organ shapes (prevents twisting) in aerial parts probably by regulating transverse microtubules (MT) arrays alignment. Regulates the formation of oval xylem secondary cell-wall deposition pits through microtubule-dependent lateral inhibition of Rho GTPase domains, thus confining the area of active ROP domains within the lattice of the cortical microtubules. May associate with nucleic acids and regulate gene expression at the transcriptional or post-transcriptional level. This chain is Protein IQ-DOMAIN 14, found in Arabidopsis thaliana (Mouse-ear cress).